Consider the following 274-residue polypeptide: Nitrate import ATP-binding protein NrtD (274 aa).

An ABC transporter domain is found at 17–250 (LHFDCVGKTF…RPREREAVVE (234 aa)). Residue 53–60 (GHSGCGKS) coordinates ATP.

This sequence belongs to the ABC transporter superfamily. Nitrate/nitrite/cyanate uptake transporter (NitT) (TC 3.A.1.16) family. In terms of assembly, the complex is composed of two ATP-binding proteins (NrtC and NrtD), two transmembrane proteins (NrtB) and a solute-binding protein (NrtA).

The protein resides in the cell inner membrane. The enzyme catalyses nitrate(out) + ATP + H2O = nitrate(in) + ADP + phosphate + H(+). Its function is as follows. Part of the ABC transporter complex NrtABCD involved in nitrate uptake. The complex is probably also involved in nitrite transport. Probably responsible for energy coupling to the transport system. This is Nitrate import ATP-binding protein NrtD from Synechococcus elongatus (strain ATCC 33912 / PCC 7942 / FACHB-805) (Anacystis nidulans R2).